The sequence spans 635 residues: Protein NSP-INTERACTING KINASE 2 (635 aa).

Positions 1–32 are cleaved as a signal peptide; it reads MLQGRREAKKSYALFSSTFFFFFICFLSSSSA. Topologically, residues 33–248 are extracellular; it reads ELTDKGVNFE…DGGTKNRKIA (216 aa). Asn-92 and Asn-103 each carry an N-linked (GlcNAc...) asparagine glycan. LRR repeat units follow at residues 104-128, 129-153, 155-176, and 177-200; these read LTNLQTVLLQNNYITGNIPHEIGKL, MKLKTLDLSTNNFTGQIPFTLSYSK, LQYLRVNNNSLTGTIPSSLANM, and TQLTFLDLSYNNLSGPVPRSLAKT. 7 N-linked (GlcNAc...) asparagine glycosylation sites follow: Asn-140, Asn-162, Asn-175, Asn-188, Asn-219, Asn-231, and Asn-235. The segment at 214 to 242 is disordered; it reads TEKDCNGTQPKPMSITLNSSQNKSSDGGT. Residues 219–241 are compositionally biased toward polar residues; that stretch reads NGTQPKPMSITLNSSQNKSSDGG. A helical transmembrane segment spans residues 249–269; the sequence is VVFGVSLTCVCLLIIGFGFLL. Residues 270–635 lie on the Cytoplasmic side of the membrane; the sequence is WWRRRHNKQV…VQAMELSGPR (366 aa). Thr-309 carries the phosphothreonine modification. The Protein kinase domain maps to 312 to 591; that stretch reads FSSKNLVGKG…EGDGLVEKWE (280 aa). ATP is bound by residues 318 to 326 and Lys-340; that span reads VGKGGFGNV. Ser-393 and Ser-396 each carry phosphoserine. A Phosphothreonine modification is found at Thr-408. Residues 422–502 form an interaction with geminivirus NSP protein region; it reads YLHEQCDPKI…DVFGFGILLL (81 aa). The active-site Proton acceptor is the Asp-435. 3 positions are modified to phosphothreonine: Thr-468, Thr-469, and Thr-474. Tyr-482 carries the post-translational modification Phosphotyrosine. A Phosphoserine modification is found at Ser-484. Thr-485 carries the post-translational modification Phosphothreonine. Residue Ser-489 is modified to Phosphoserine. Thr-564 carries the post-translational modification Phosphothreonine. Polar residues predominate over residues 593 to 613; it reads SSQRAETNRSYSKPNEFSSSE. Positions 593 to 621 are disordered; that stretch reads SSQRAETNRSYSKPNEFSSSERYSDLTDD.

This sequence belongs to the protein kinase superfamily. Ser/Thr protein kinase family. As to quaternary structure, oligomer. Interacts with geminivirus nuclear shuttle protein (NSP). In terms of processing, autophosphorylated. In terms of tissue distribution, expressed in flowers and roots.

The protein resides in the cell membrane. It catalyses the reaction L-seryl-[protein] + ATP = O-phospho-L-seryl-[protein] + ADP + H(+). The enzyme catalyses L-threonyl-[protein] + ATP = O-phospho-L-threonyl-[protein] + ADP + H(+). With respect to regulation, inhibited by the viral nuclear shuttle protein (NSP) that binds to the region required for oligomerization. Functionally, involved in defense response to geminivirus infection. Phosphorylates RPL10A in vitro. This Arabidopsis thaliana (Mouse-ear cress) protein is Protein NSP-INTERACTING KINASE 2 (NIK2).